We begin with the raw amino-acid sequence, 281 residues long: Probable replication-associated protein repA1 (281 aa).

This sequence belongs to the IncFII RepA family.

Its function is as follows. This protein is essential for plasmid replication; it is involved in copy control functions. The chain is Probable replication-associated protein repA1 (repA1) from Buchnera aphidicola subsp. Cinara cedri (strain Cc).